The sequence spans 176 residues: Peptide methionine sulfoxide reductase MsrA (176 aa).

Residue Cys-12 is part of the active site.

The protein belongs to the MsrA Met sulfoxide reductase family.

The enzyme catalyses L-methionyl-[protein] + [thioredoxin]-disulfide + H2O = L-methionyl-(S)-S-oxide-[protein] + [thioredoxin]-dithiol. It carries out the reaction [thioredoxin]-disulfide + L-methionine + H2O = L-methionine (S)-S-oxide + [thioredoxin]-dithiol. In terms of biological role, has an important function as a repair enzyme for proteins that have been inactivated by oxidation. Catalyzes the reversible oxidation-reduction of methionine sulfoxide in proteins to methionine. The polypeptide is Peptide methionine sulfoxide reductase MsrA (Thermus thermophilus (strain ATCC BAA-163 / DSM 7039 / HB27)).